We begin with the raw amino-acid sequence, 334 residues long: Ornithine carbamoyltransferase (334 aa).

Carbamoyl phosphate is bound by residues 57 to 60 (STRT), Gln-84, Arg-108, and 135 to 138 (HPTQ). Residues Asn-169, Asp-233, and 237–238 (SM) each bind L-ornithine. Residues 275–276 (CL) and Arg-320 each bind carbamoyl phosphate.

Belongs to the aspartate/ornithine carbamoyltransferase superfamily. OTCase family.

It localises to the cytoplasm. The enzyme catalyses carbamoyl phosphate + L-ornithine = L-citrulline + phosphate + H(+). The protein operates within amino-acid biosynthesis; L-arginine biosynthesis; L-arginine from L-ornithine and carbamoyl phosphate: step 1/3. Reversibly catalyzes the transfer of the carbamoyl group from carbamoyl phosphate (CP) to the N(epsilon) atom of ornithine (ORN) to produce L-citrulline. This is Ornithine carbamoyltransferase (argF) from Pasteurella multocida (strain Pm70).